We begin with the raw amino-acid sequence, 268 residues long: Indole-3-glycerol phosphate synthase (268 aa).

Belongs to the TrpC family.

The enzyme catalyses 1-(2-carboxyphenylamino)-1-deoxy-D-ribulose 5-phosphate + H(+) = (1S,2R)-1-C-(indol-3-yl)glycerol 3-phosphate + CO2 + H2O. Its pathway is amino-acid biosynthesis; L-tryptophan biosynthesis; L-tryptophan from chorismate: step 4/5. This Micrococcus luteus (strain ATCC 4698 / DSM 20030 / JCM 1464 / CCM 169 / CCUG 5858 / IAM 1056 / NBRC 3333 / NCIMB 9278 / NCTC 2665 / VKM Ac-2230) (Micrococcus lysodeikticus) protein is Indole-3-glycerol phosphate synthase.